The chain runs to 348 residues: Hereditary hemochromatosis protein (348 aa).

Positions 1–22 (MGPRARPALLLLMLLQTAVLQG) are cleaved as a signal peptide. An alpha-1 region spans residues 23 to 114 (RLLRSHSLHY…IMENHNHSKE (92 aa)). At 23 to 306 (RLLRSHSLHY…WEPSPSGTLV (284 aa)) the chain is on the extracellular side. N110, N130, and N234 each carry an N-linked (GlcNAc...) asparagine glycan. Residues 115–205 (SHTLQVILGC…ELGRGVLDQQ (91 aa)) form an alpha-2 region. 2 disulfides stabilise this stretch: C124–C187 and C225–C282. Residues 206–297 (VPPLVKVTHH…GLDQPLIVIW (92 aa)) form an alpha-3 region. Positions 207-298 (PPLVKVTHHV…LDQPLIVIWE (92 aa)) constitute an Ig-like C1-type domain. Residues 298–306 (EPSPSGTLV) are connecting peptide. Residues 307-330 (IGVISGIAVFVVILFIGILFIILR) form a helical membrane-spanning segment. Residues 331–348 (KRQGSRGAMGHYVLAERE) lie on the Cytoplasmic side of the membrane.

It belongs to the MHC class I family. Binds TFR through the extracellular domain in a pH-dependent manner. Expressed in all tissues tested except brain.

The protein localises to the cell membrane. Binds to transferrin receptor (TFR) and reduces its affinity for iron-loaded transferrin. This Homo sapiens (Human) protein is Hereditary hemochromatosis protein (HFE).